A 179-amino-acid polypeptide reads, in one-letter code: Bifunctional protein PyrR (179 aa).

Positions 99-111 (VILVDDVLYTGRT) match the PRPP-binding motif.

This sequence belongs to the purine/pyrimidine phosphoribosyltransferase family. PyrR subfamily. Homodimer and homohexamer; in equilibrium.

The catalysed reaction is UMP + diphosphate = 5-phospho-alpha-D-ribose 1-diphosphate + uracil. Functionally, regulates transcriptional attenuation of the pyrimidine nucleotide (pyr) operon by binding in a uridine-dependent manner to specific sites on pyr mRNA. This disrupts an antiterminator hairpin in the RNA and favors formation of a downstream transcription terminator, leading to a reduced expression of downstream genes. In terms of biological role, also displays a weak uracil phosphoribosyltransferase activity which is not physiologically significant. The protein is Bifunctional protein PyrR of Brevibacillus brevis (strain 47 / JCM 6285 / NBRC 100599).